We begin with the raw amino-acid sequence, 27 residues long: Caerulein precursor fragment R8 (27 aa).

In terms of tissue distribution, expressed by the skin glands.

It is found in the secreted. In terms of biological role, antimicrobial peptide. This is Caerulein precursor fragment R8 from Xenopus ruwenzoriensis (Uganda clawed frog).